Consider the following 4023-residue polypeptide: MSHSDQDERIAVIGTGCRFPGGCDSPSKLWDLLKAPRDVLREIPRERFDANAWYHPDNKHHGTSNVRSAYLLDQDPAAFDNEFFNIQSSEAEAVDPQQRILLETVYDSLCEAGCTIEGLRGSNTAVYVGLMCDDWSAIVTKDTEVFPQYAATGTSRSVMSNRVSYFFDWHGPSMTIDTACSSSLVAVHQAIHTLRSGESNVAIAAGANLILSPDMFIAESNLSMLSAGGRSRMWDRDVDGYARGEGIAAVVLKRLSDAVRDNDQIECVIRATSVNQDGKTAGLTMPSGTAQAALIRSTYARAGLDISNPRDRPQFFHAHGTGTAAGDPQEARAIHEAFYSGTARNTDKLYVGSVKTVIGHTEGTAGLASLISTSLAMRHKIIPPNMHFNNLNPRLKPYYRNLEVPTKAYPWPEPAPGHPRRASVNSFGFGGTNAHAIIEEYLPSQTRDLAEHTTAVSLLTPLVFSASSEISLRSLLASYSAYLKENLTISLQSLAYTLQARRSTMPHRVAITCNTTSELISAIDGIISGQENSTIAVRHLSKPTPKVLAVFTGQGAQWARMGAKLVETSPFVSKRLKELDEALATSAAGNSPQWTLSEMILAGPALSRVAEAAISQPLCTAVQIVLVDLLRQAGVRIDAVVGHSSGEIGAAYASGLYTARDAIRAAYYRGLYSSLAKSPNGGKGSMMAVSTTHQDAIEFCELETFEGRLQVAAVNSFDSITLSGDADAVAEACEVYQDEGAFARQLKVDTAYHSSHVLPCSKPYLEAMTSAGREALPKAPSDALPWPTWYSSVRDGQEMTREDVQPQYWVDNMANPVLFSTAVEAACSDKGLFDLIIEVGPHPALQKPCLDTVEETAGARPPYVGLLGRGKDDVSAFSKALGFIWTQLGPQSVAFDNVERAASEPPVVPRELLKDLPQYPFDHSSKFLSLSRVSGFYNRSQMATHPLLGKRCYDRETNLCIQWRNILSLKEVPWLTGHQIQGLTVFPAAGFVSMAIEAIVALAKDSTIGLLSLENVNIGRAMAFQDDSSRVEVLFDMRIIAQTPHEIAAEWASYSGDPHDIKTVLTLNASGVVRATLAENNASAEPDVLPALDVIDNNDLSPVDTERFYKFLRKLGYNYSWPFYGTKSIQRKAGFSTGMLEDQSGDEWQDQLLVHPGMIDTALQTAFAAFCCPGDERLWSLHVPTRFKSLVINPFFTARGIGKQRMLKFVSTAAAVKQGKIAAELYLQSEHEGQTHTFLQAEGLEIVPLAAAVPDNDTVLFSRFDYKLACADGETAAILDTPLSQDAIDDVINAERVAFYHLYNVVKSITPGEEASALPHYQQFLSWARNVVENVLRGDNKYVPASAAQDSASDIASLLTGLPFRFDKNGEVSLAEAIGKNLISAIRTSSTVFQAEDRNLPAELYEKAIGFDTGNQCLANMIASISHRYPRMNILEVGSQVGSSTEAILSQLDTAFDTYTYTNISDDSFGLAEEHFTAYGDRINFKTLDITQSPTSQGFALGEYDLVVASNVISSGSDMTESLTNLRALLKPGGFAVILEPVDNDCLRLGLALGCMPDRSPPLGLPQWNSLLSETGFSGTDTISPRSHGAVPGVVFCTQAIDDRIKMLRSPLSNISCLPGLEAPELAIVGRGQSSELQNLCGELSDLLSSAFPKVTFVDSVEQVTAETIPTTSAVIMLAELGESPWASLNPVKLEGIKNIYRQARNLLWVTSGADSKDPYSNISLGIGRAMQFEYPHLSIQALDVDTISENTAKIIAEHLLRLGTLSTWKEDPEQPTMLWSMEPEVWIKNDMPIIPRLCPYTPGNDRYNTTRRTVRNQVIPRDTHLALTNDNGAWEVQVTSPLHQAPKIPYATDTKQVRVTDVLLSTLGIIPGTMLMLCTGQDTSTGEALLALSPIAETLVQVPRSWTTGIDNAEPRDALGAVAANIVAKLMAKSAFRGDVLIVHDPHPAVAHELAIIANKGAFTIHFTTASAQVSIEQGWHHIGSRFSASKVKSLLPINANKLLDLSKSSADGISAHILSSLPRGCRVVDMSHIMGNTTELQSWVSEDEVATVLQESVTEVLRSDRYTNLVNNVPLVSLESISEPTHHASFAIADCSVPAVTARVRAVDDGIIFRGDNTYLLVGLTGEIGRSLCKWMAERGARHIVLTSRTPKEDVVFSSAMKALGAVVKYLPMDVRSRDSIHACYAMIQNTMPPVAGVANGAMIIHDMVFDNMSFEVMDKVLAPKVVGSQLLDELFYDTPLDFFIFFSSMTAVMGNSGQANYLAGNMYMNALAAQRKERGVAGSSINISSVIGVGYVERSDQLDEEYFLNMGYRPMSEQDLQVSFAEAIVLGKPGSSEIAELSTGINSTLNGQSIGKWLQDIKFSHMMMHESNDNAGMGPGASAAPLKVQLSEAKSKEDIISIIKEVFLARLRRILSIPADKNINEDVTLVEQGVDSLMAVEVRSFFNKELDVDIPVLKILGDISINGIIKQVVELLPAAVYDLPEETPQTLSKNPAPTPVKAPVSAPSTPAAASQPVLTDSTASSSRDSDDDQASSNSTSYETSKDASREDSEVDETPLESPVNTPNVMSKPSASSQLLEKKQLLEVDALIASSRPETLAPMSHGQEGFWFLQDYLPDKTVFNTSVMLKLEGEISVETLSQALQMVARRHEILRTRFFSADDDGEQKVMQAIAANSSLELETKQITSGNEAQVEFTRFNKHVFDLANGEAARVLLLSLSKTEHFLMAGMHHIYLDGYSFSIFFNDLNTAYTSKRLPPLPSNSQYRSFVEQERERYESGEFDETIAHYRETLPKDLAPIELLPFARGTTRREVNNYDQTESKMRIDRPLADKIRQLARNNRSTSFHVFLAAFQALLFQLLPESDDLIIGMGDANRDDKKYLNSIGYFFNLLPLHFSRFKSGTKIADLVQDSRSAVREALERPHVPLSILLDELDVPRSNKHTPLFQVCIDHRQVLQEQSNWGGCRVSDEQWHDAGTGFDISLQITEFNTDASLSLRLQKPMYTEEHTNMLLRSFVAVLEHMADVPTDNMVEDIPSWSELDIQKALTVGKGREFHSRWDSNPPTVMHRIHEMITVHGSTTALKDGHGSTLSYEQMGRRIAAISAALIEKGIARGDVIGVFQEPSVDWICSMMAIFNIGATYMALDQRLTLPRLATIVQTAKPAAILTDSFTSSQVTDIGASAITTVLVSHLASSVNTKPINAARAEDVAVVLFTSGSTGVPKGMRMTHANLVFSTDSISGAFNVTQESMVLQQSPFSFDPSLCQTLVALTNGAALYVVPSRSRGDPMAVTKIMAEEKVTFTVGTPSEYAMLLEYGADNIRQCHAWKCAAWGGEQMPHGLAKQLAAANLPGLKAHNVYGPSETTMLSHFHLVNPAEIEGNGYIPVGAGFDGYKYCIVDHQMRVQPIGVPGEIIIGGPAVVAGYLNNQQLTDTKFLADSFFGTNGKVYRSGDLGRMLEDGTLVVEGRLDGDDLIKLRGFRIELEEIEKAIVKQADGTLGDAIVSLRGEGDAQFLAAHVTLSADLSPPAKQKLISALQRLPLSSYMIPSVFGVIKAIPKTAHDKVDRKAAKELPLPSADDENSLAVHGIDGGDDSVLSGTERQLGTLWRQVIPVYVGSLASTSDFFLAGGNSLLLVKLQALLRTEFGATPKLMDLMGASNLAAMADAVQKEVDSSLTRDGIDWDLETRPPVALQHKLSGFISSARTNTTRPDASRFNVLLTGATGQLGRHVLSQLVTNGKTSRVICLTRQPDKIEANDKVTTLRGDVSEPNFGLSEQEYQQLATETDVIMHCVANRSFWDRYEVLQPVNVSAVKSLVGLIADSGRIIPLHFMSSGAVSHYYNLGTSPPRDGSDGYVASKWAAEGFLRRIAAETSIPIYIHRPSSVDGDALGSPQEREAVTDQLMGIVNSMEIQPEFGGVDGTLDIAPVDDMAQSLAELVLKSITEAAETDGSEKNLIQEFKHKAALQVYARDFAARLESEGQHAQFPKMPILEWFGQAKAAGFSYIIAAQELVMTSGLDAITTRR.

Residues 7-440 (DERIAVIGTG…GTNAHAIIEE (434 aa)) form the Ketosynthase family 3 (KS3) domain. Active-site for beta-ketoacyl synthase activity residues include Cys-180, His-319, and His-360. The tract at residues 550–871 (VFTGQGAQWA…PYVGLLGRGK (322 aa)) is malonyl-CoA:ACP transacylase (MAT) domain. The N-terminal hotdog fold stretch occupies residues 945–1080 (HPLLGKRCYD…GVVRATLAEN (136 aa)). The interval 945-1249 (HPLLGKRCYD…QAEGLEIVPL (305 aa)) is dehydratase (DH) domain. The PKS/mFAS DH domain maps to 945 to 1255 (HPLLGKRCYD…IVPLAAAVPD (311 aa)). The active-site Proton acceptor; for dehydratase activity is the His-978. Residues 1099–1255 (DLSPVDTERF…IVPLAAAVPD (157 aa)) are C-terminal hotdog fold. Asp-1160 serves as the catalytic Proton donor; for dehydratase activity. Residues 1402 to 1585 (AELYEKAIGF…GFSGTDTISP (184 aa)) are methyltransferase (MT) domain. A ketoreductase (KR) domain region spans residues 2120 to 2291 (TYLLVGLTGE…GVAGSSINIS (172 aa)). Residues 2404 to 2479 (SIIKEVFLAR…GIIKQVVELL (76 aa)) form the Carrier 1 domain. Ser-2439 carries the O-(pantetheine 4'-phosphoryl)serine modification. The disordered stretch occupies residues 2490–2580 (TPQTLSKNPA…VMSKPSASSQ (91 aa)). Over residues 2502-2529 (PVKAPVSAPSTPAAASQPVLTDSTASSS) the composition is skewed to low complexity. Positions 2565–2580 (PVNTPNVMSKPSASSQ) are enriched in polar residues. The tract at residues 2604-3043 (PMSHGQEGFW…DIPSWSELDI (440 aa)) is condensation (C) domain. The tract at residues 3072-3467 (EMITVHGSTT…DGTLVVEGRL (396 aa)) is adenylation (A) (KR) domain. The Carrier 2 domain maps to 3593–3670 (SVLSGTERQL…AMADAVQKEV (78 aa)). Ser-3630 is modified (O-(pantetheine 4'-phosphoryl)serine). The tract at residues 3783-3932 (ETDVIMHCVA…IAPVDDMAQS (150 aa)) is reductase (RED) domain.

This sequence in the C-terminal section; belongs to the NRP synthetase family.

The protein operates within secondary metabolite biosynthesis. Hybrid PKS-NRPS synthetase; part of the gene cluster that mediates the biosynthesis of varicidin A, an antifungal natural product containing a cis-octahydrodecalin core. The PKS module of pvhA together with the enoylreductase pvhC catalyze the formation of the polyketide unit which is then conjugated to L-isoleucine by the condensation domain of the NRPS module. Activity of the Dieckmann cyclase domain (RED) of pvhA results in release of an acyclic tetramate. The cytochrome P450 monooxygenase pvhE then catalyzes the oxidation of the C21 methyl group to a to carboxylate group. The methyltransferase pvhD then further methylates the pvhE product. The Diels-Alderase pvhB is able to catalyze Diels-Alder cycloaddition using both pvhE and pvhD products as substrates to form the decalin ring, yielding varicidin B and A, respectively. This chain is Hybrid PKS-NRPS synthetase pvhA, found in Talaromyces variabilis (Penicillium variabile).